We begin with the raw amino-acid sequence, 427 residues long: Putative FBD-associated F-box protein At3g50710 (427 aa).

The region spanning 1-53 (MDRISNLSDDLLLKIVSSLPTKDVVVTMLLSKRWKFLWMMVPKLRFDDEFELE) is the F-box domain. The 51-residue stretch at 345–395 (HWEEPSSVPQCLLFHLNIFEWKYYNAGDEEKKVVAYILKNARQLKTATFSA) folds into the FBD domain.

This chain is Putative FBD-associated F-box protein At3g50710, found in Arabidopsis thaliana (Mouse-ear cress).